Consider the following 580-residue polypeptide: FAD-dependent monooxygenase yanF (580 aa).

The segment at 1-21 (MSSSAECRPIGWGGWGPDPNT) is disordered. The FAD-binding PCMH-type domain maps to 150 to 322 (CRLNASCIVT…VEYDLTTNTG (173 aa)). His-187 carries the post-translational modification Pros-8alpha-FAD histidine.

This sequence belongs to the oxygen-dependent FAD-linked oxidoreductase family.

It functions in the pathway secondary metabolite biosynthesis; terpenoid biosynthesis. In terms of biological role, FAD-dependent monooxygenase; part of the gene cluster that mediates the biosynthesis of yanuthone D, a fungal isoprenoid epoxycyclohexenone that acts as an antibiotic against fungi and bacteria. The first step of the pathway is the synthesis of 6-methylsalicylic acid (6-MSA) by the polyketide synthase yanA. 6-MSA is then converted to m-cresol by the decarboxylase yanB. The cytochrome P450 monooxygenase yanC then catalyzes the oxidation of m-cresol to toluquinol. Epoxidation of toluquinol is then performed by the short chain dehydrogenase yanD, with the help of yanE, and a further prenylated by yanG leads to 7-deacetoxyyanuthone A. The next step is the hydroxylation of C-22 of 7-deacetoxyyanuthone A by the cytochrome P450 monooxygenase yanH to yield 22-deacetylyanuthone A. O-Mevalon transferase yanI then attaches mevalon to the hydroxyl group of 22-deacetylyanuthone A to produce yanuthone E. Finally, the FAD-dependent monooxygenase yanF oxidizes the hydroxyl group at C15 of yanuthone E to form yanuthone D. Furthermore, several branching points in the pathway lead to the production of yanuthones F and G from 7-deacetoxyyanuthone A; yanuthones H and I from 22-deacetylyanuthone A; and yanuthone J from yanuthone E. The chain is FAD-dependent monooxygenase yanF from Aspergillus niger (strain ATCC 1015 / CBS 113.46 / FGSC A1144 / LSHB Ac4 / NCTC 3858a / NRRL 328 / USDA 3528.7).